The chain runs to 95 residues: MEEWFLYLIRCPDNRLYTGITTDVARRFAQHQRGKGAKALRGKGELTLVFSAPAGSRSEALRAEYRIKQLTKRQKEQLVAGELAFEAMKSAPQTP.

One can recognise a GIY-YIG domain in the interval 2-77 (EEWFLYLIRC…KQLTKRQKEQ (76 aa)).

Belongs to the UPF0213 family.

This chain is UPF0213 protein ESA_03545, found in Cronobacter sakazakii (strain ATCC BAA-894) (Enterobacter sakazakii).